Consider the following 275-residue polypeptide: MKIANFEVGNGKPFFLMSGPCVIESEQMAMDTAGYLAEVTKDLGINFVYKSSFDKANRSSINSFRGLGVDKGLEILAKVKKTYNVPVVTDVHEDTPFAEVAEVVDVMQTPAFLCRQTNFILDVCKQGKPVNIKKGQFLAPWDMQHVVAKAKSTGNEQIMVCERGVSFGYNNLVSDMRSLEIMKSTGCPVVFDATHSVQLPGGQGSSSGGQREFVPVLSKAAMAVGIDGLFMETHPKPAEALSDGPNSFPMYKIKEFLSLLKELDHLVKSQPKIEL.

Belongs to the KdsA family.

It is found in the cytoplasm. It catalyses the reaction D-arabinose 5-phosphate + phosphoenolpyruvate + H2O = 3-deoxy-alpha-D-manno-2-octulosonate-8-phosphate + phosphate. The protein operates within carbohydrate biosynthesis; 3-deoxy-D-manno-octulosonate biosynthesis; 3-deoxy-D-manno-octulosonate from D-ribulose 5-phosphate: step 2/3. It participates in bacterial outer membrane biogenesis; lipopolysaccharide biosynthesis. The sequence is that of 2-dehydro-3-deoxyphosphooctonate aldolase from Francisella philomiragia subsp. philomiragia (strain ATCC 25017 / CCUG 19701 / FSC 153 / O#319-036).